The following is a 273-amino-acid chain: Orotidine 5'-phosphate decarboxylase (273 aa).

Catalysis depends on K96, which acts as the Proton donor.

This sequence belongs to the OMP decarboxylase family. Type 2 subfamily.

The catalysed reaction is orotidine 5'-phosphate + H(+) = UMP + CO2. The protein operates within pyrimidine metabolism; UMP biosynthesis via de novo pathway; UMP from orotate: step 2/2. The chain is Orotidine 5'-phosphate decarboxylase from Flavobacterium johnsoniae (strain ATCC 17061 / DSM 2064 / JCM 8514 / BCRC 14874 / CCUG 350202 / NBRC 14942 / NCIMB 11054 / UW101) (Cytophaga johnsonae).